A 120-amino-acid polypeptide reads, in one-letter code: Spermidine export protein MdtJ (120 aa).

Helical transmembrane passes span 1–21 (MFYWILLALAIVAEITGTLSM), 31–51 (AGYILMLVMITLSYIFLSFAV), 54–74 (IALGVAYALWEGIGILFITVF), and 81–101 (EVLSTMKIVGLLTLIVGIVLI).

The protein belongs to the drug/metabolite transporter (DMT) superfamily. Small multidrug resistance (SMR) (TC 2.A.7.1) family. MdtJ subfamily. In terms of assembly, forms a complex with MdtI.

The protein localises to the cell inner membrane. Functionally, catalyzes the excretion of spermidine. This Salmonella arizonae (strain ATCC BAA-731 / CDC346-86 / RSK2980) protein is Spermidine export protein MdtJ.